The primary structure comprises 721 residues: ATP-dependent zinc metalloprotease FtsH (721 aa).

At 1–44 (MYFLKKIVNLFSSKIESEDNNVKKDDLTQPRKQSPEARKRRNRR) the chain is on the cytoplasmic side. The helical transmembrane segment at 45-65 (IIFWLIILLIIGTIIGVIIYF) threads the bilayer. Topologically, residues 66–190 (SVRKEYDNVI…AGIPSSGFNP (125 aa)) are extracellular. A helical membrane pass occupies residues 191 to 211 (QVIISPLISIIFFIIFLYIIL). Over 212 to 721 (RVSKAQSDSL…KDKEKDQKSN (510 aa)) the chain is Cytoplasmic. Position 279–286 (279–286 (GPPGTGKT)) interacts with ATP. Histidine 498 provides a ligand contact to Zn(2+). Glutamate 499 is an active-site residue. Residues histidine 502 and aspartate 577 each coordinate Zn(2+). Positions 686-721 (NKREASQKQANSSVEEAKVVDDEESIKDKEKDQKSN) are disordered. The span at 700–721 (EEAKVVDDEESIKDKEKDQKSN) shows a compositional bias: basic and acidic residues.

It in the central section; belongs to the AAA ATPase family. This sequence in the C-terminal section; belongs to the peptidase M41 family. As to quaternary structure, homohexamer. The cofactor is Zn(2+).

It is found in the cell membrane. Functionally, acts as a processive, ATP-dependent zinc metallopeptidase for both cytoplasmic and membrane proteins. Plays a role in the quality control of integral membrane proteins. This is ATP-dependent zinc metalloprotease FtsH from Ureaplasma parvum serovar 3 (strain ATCC 27815 / 27 / NCTC 11736).